We begin with the raw amino-acid sequence, 178 residues long: MSRVGKKPIEIPAGVTVTVNGNTVTVKGPKGELTRTFHPDMTITVEGNVITVTRPSDEKHHRALHGTTRSLLANMVEGVSKGYEKALELVGVGYRASKQGKKLVLSVGYSHPVEIEPEEGLEIEVPSQTKIIVKGADKQRVGELAANIRAVRPPEPYKGKGIRYEGELVRLKEGKTGK.

It belongs to the universal ribosomal protein uL6 family. In terms of assembly, part of the 50S ribosomal subunit.

Its function is as follows. This protein binds to the 23S rRNA, and is important in its secondary structure. It is located near the subunit interface in the base of the L7/L12 stalk, and near the tRNA binding site of the peptidyltransferase center. In Geobacillus kaustophilus (strain HTA426), this protein is Large ribosomal subunit protein uL6.